The following is a 582-amino-acid chain: Zinc finger protein 319 (582 aa).

Positions 1-14 (MSESWQQPPQTQPQ) are enriched in low complexity. Residues 1 to 39 (MSESWQQPPQTQPQQPQPPQPQHHAEPPPALAEHTLPPG) form a disordered region. A C2H2-type 1 zinc finger spans residues 76-100 (PKCGVCGHDLAHLSSPHEHQCLAGH). The C2H2-type 2; degenerate zinc finger occupies 104–126 (FQCTQCLKIFHQATDLLEHQCVQ). Lys130 is covalently cross-linked (Glycyl lysine isopeptide (Lys-Gly) (interchain with G-Cter in SUMO2)). The segment at 132-154 (FVCGVCKMGFSLLTSLAQHHSSH) adopts a C2H2-type 3 zinc-finger fold. Over residues 174 to 196 (EPATTAAPSLPAAPAPSTVTPAE) the composition is skewed to low complexity. The segment at 174–198 (EPATTAAPSLPAAPAPSTVTPAEQA) is disordered. C2H2-type zinc fingers lie at residues 202–224 (YSCP…ERIH), 230–252 (YKCT…KRTH), and 258–280 (YKCA…MYAH). The residue at position 281 (Ser281) is a Phosphoserine. The C2H2-type 7; degenerate zinc-finger motif lies at 287-309 (FRCNVCELHFKESSELLQHPCTP). 3 C2H2-type zinc fingers span residues 315-337 (FRCG…ERTH), 343-365 (FKCD…RRTH), and 371-393 (FKCG…QHVH). The C2H2-type 11; degenerate zinc finger occupies 399 to 421 (FKCPVCQKGFDQSAELLRHKCLP). The C2H2-type 12 zinc finger occupies 428 to 450 (FKCPVCNKAYKRASALQKHQLAH). Residues 458–480 (LRCTLCERRFFSSSEFVQHRCDP) form a C2H2-type 13; degenerate zinc finger. 3 consecutive C2H2-type zinc fingers follow at residues 486-508 (LKCP…RRVH), 514-536 (YKCP…QGVH), and 542-564 (FKCV…SAQH).

Belongs to the krueppel C2H2-type zinc-finger protein family.

It is found in the nucleus. May be involved in transcriptional regulation. In Homo sapiens (Human), this protein is Zinc finger protein 319 (ZNF319).